Consider the following 447-residue polypeptide: Glutamyl-tRNA reductase (447 aa).

Substrate is bound by residues 56–59 (TCNR), serine 119, 124–126 (ETQ), and glutamine 130. Cysteine 57 (nucleophile) is an active-site residue. 201–206 (GLGEMS) provides a ligand contact to NADP(+).

It belongs to the glutamyl-tRNA reductase family. In terms of assembly, homodimer.

The enzyme catalyses (S)-4-amino-5-oxopentanoate + tRNA(Glu) + NADP(+) = L-glutamyl-tRNA(Glu) + NADPH + H(+). It participates in porphyrin-containing compound metabolism; protoporphyrin-IX biosynthesis; 5-aminolevulinate from L-glutamyl-tRNA(Glu): step 1/2. Functionally, catalyzes the NADPH-dependent reduction of glutamyl-tRNA(Glu) to glutamate 1-semialdehyde (GSA). The protein is Glutamyl-tRNA reductase of Helicobacter acinonychis (strain Sheeba).